We begin with the raw amino-acid sequence, 141 residues long: Nucleoside diphosphate kinase (141 aa).

Residues lysine 11, phenylalanine 59, arginine 87, threonine 93, arginine 104, and asparagine 114 each coordinate ATP. The active-site Pros-phosphohistidine intermediate is the histidine 117.

Belongs to the NDK family. In terms of assembly, homotetramer. It depends on Mg(2+) as a cofactor.

The protein resides in the cytoplasm. It catalyses the reaction a 2'-deoxyribonucleoside 5'-diphosphate + ATP = a 2'-deoxyribonucleoside 5'-triphosphate + ADP. It carries out the reaction a ribonucleoside 5'-diphosphate + ATP = a ribonucleoside 5'-triphosphate + ADP. Its function is as follows. Major role in the synthesis of nucleoside triphosphates other than ATP. The ATP gamma phosphate is transferred to the NDP beta phosphate via a ping-pong mechanism, using a phosphorylated active-site intermediate. This is Nucleoside diphosphate kinase from Burkholderia mallei (strain NCTC 10247).